We begin with the raw amino-acid sequence, 31 residues long: Photosystem II reaction center protein T (31 aa).

The helical transmembrane segment at 3–23 threads the bilayer; sequence ALVYTFLLVGTLGIIFFAIFF.

This sequence belongs to the PsbT family. As to quaternary structure, PSII is composed of 1 copy each of membrane proteins PsbA, PsbB, PsbC, PsbD, PsbE, PsbF, PsbH, PsbI, PsbJ, PsbK, PsbL, PsbM, PsbT, PsbY, PsbZ, Psb30/Ycf12, at least 3 peripheral proteins of the oxygen-evolving complex and a large number of cofactors. It forms dimeric complexes.

The protein resides in the plastid. The protein localises to the chloroplast thylakoid membrane. Found at the monomer-monomer interface of the photosystem II (PS II) dimer, plays a role in assembly and dimerization of PSII. PSII is a light-driven water plastoquinone oxidoreductase, using light energy to abstract electrons from H(2)O, generating a proton gradient subsequently used for ATP formation. This is Photosystem II reaction center protein T from Chlorella vulgaris (Green alga).